The sequence spans 274 residues: uncharacterized protein (274 aa).

The stretch at 99 to 206 (NNVISGYVDL…ESEMEIFIQK (108 aa)) forms a coiled coil.

This is an uncharacterized protein from Dictyostelium discoideum (Social amoeba).